Here is a 945-residue protein sequence, read N- to C-terminus: Cysteine-rich, acidic integral membrane protein (945 aa).

A disordered region spans residues 1–20 (MGNEAGPIFEESNAEVGTPP). An N-terminal signal peptide occupies residues 1–23 (MGNEAGPIFEESNAEVGTPPADA). At 24-882 (VHDDFFFDYK…GKGSSVSAGL (859 aa)) the chain is on the extracellular side. Residues N34 and N43 are each glycosylated (N-linked (GlcNAc...) asparagine). Tandem repeats lie at residues 40–51 (DDCNITGDCNET), 52–63 (DDCDITGDCNET), 64–75 (DDCNITGDCNET), 76–87 (DDCNITGDCNET), 88–99 (DDCNITGDCNET), 100–111 (DDCNITGDCNET), 112–123 (DDCDITGDCNET), 124–135 (DDCNITGDCNET), 136–147 (DDCNITGDCNET), 148–159 (DDCNITGDCNET), 160–171 (DDCDITGDCNET), 172–183 (DDCNITGDCNET), 184–195 (DDCDITGDCNET), 196–207 (DDCNITGDCNET), 208–219 (DDCNITGDCNET), 220–231 (DDCNITGDCNET), 232–243 (DDCNITGDCNET), 244–255 (DDCNITGDCNET), 256–267 (DDCNITGDCNET), 268–279 (DDCDITGDCNET), 280–291 (DDCNITGDCNET), 292–303 (DDCNITGDCNET), 304–315 (DDCNITGDCNET), 316–327 (DDCNITGDCNET), 328–339 (DDCNITGDCNET), 340–351 (DDCNITGDCNET), 352–363 (DDCDITGDCNET), 364–375 (DDCNITGDCNET), 376–387 (DDCNITGDCNET), 388–399 (DDCNITGDCNET), 400–411 (DDCNITGDCNET), 412–423 (DDCNITGDCNET), 424–435 (DDCDITGDCNET), 436–447 (DDCNITGDCNET), 448–459 (DDCDITGDCNET), 460–471 (DDCNITGDCNET), 472–483 (DDCNITGDCNET), 484–495 (DDCNITGDCNET), 496–507 (DDCNITGDCNET), 508–519 (DDCNITGDCNET), 520–531 (DDCNITGDCNET), 532–543 (DDCDITGDCNET), 544–555 (DDCNITGDCNET), 556–567 (DDCNITGDCNET), 568–579 (DDCNITGDCNET), 580–591 (DDCNITGDCNET), 592–603 (DDCNITGDCNET), 604–615 (DDCDITGDCNET), 616–627 (DDCNITGDCNET), 628–639 (DDCDITGDCNET), 640–651 (DDCNITGDCNET), 652–663 (DDCNITGDCNET), 664–675 (DDCNITGDCNET), 676–687 (DDCNITGDCNET), 688–699 (DDCNITGDCNET), 700–711 (DDCNITGDCNET), 712–723 (DDCDITGDCNET), 724–735 (DDCNITGDCNET), 736–747 (DDCNITGDCNET), 748–759 (DDCNITGDCNET), 760–771 (DDCNITGDCNET), 772–783 (DDCNITGDCNET), 784–795 (DDCDITGDCNET), 796–807 (DDCNITGDCNET), 808–819 (DDCDITGDCNET), and 820–831 (DDCNITGDCNET). The tract at residues 40 to 831 (DDCNITGDCN…CNITGDCNET (792 aa)) is 66 X 12 AA tandem repeats of D-D-C-[ND]-I-T-G-D-G-N-E-T. 4 N-linked (GlcNAc...) asparagine glycosylation sites follow: N67, N79, N91, and N103. N-linked (GlcNAc...) asparagine glycosylation is found at N127, N139, and N151. Residue N175 is glycosylated (N-linked (GlcNAc...) asparagine). N-linked (GlcNAc...) asparagine glycans are attached at residues N199, N211, N223, N235, N247, and N259. N-linked (GlcNAc...) asparagine glycosylation is found at N283, N295, N307, N319, N331, and N343. N-linked (GlcNAc...) asparagine glycosylation is found at N367, N379, N391, N403, and N415. N439 is a glycosylation site (N-linked (GlcNAc...) asparagine). N-linked (GlcNAc...) asparagine glycosylation is found at N463, N475, N487, N499, N511, and N523. N-linked (GlcNAc...) asparagine glycans are attached at residues N547, N559, N571, N583, and N595. N619 is a glycosylation site (N-linked (GlcNAc...) asparagine). N-linked (GlcNAc...) asparagine glycans are attached at residues N643, N655, N667, N679, N691, and N703. 5 N-linked (GlcNAc...) asparagine glycosylation sites follow: N727, N739, N751, N763, and N775. The N-linked (GlcNAc...) asparagine glycan is linked to N799. N823 carries an N-linked (GlcNAc...) asparagine glycan. A helical membrane pass occupies residues 883 to 903 (LLLAGSTFLVLAVGLSAVLFL). At 904-945 (GRERQNAVVICDNEVMMEEVPGCLSDASFAVPVTQSSDEARP) the chain is on the cytoplasmic side.

Its subcellular location is the flagellar pocket. The protein resides in the cell membrane. Functionally, supposed to function as cell surface receptor. Possibly involved in receptor-mediated endocytosis. The protein is Cysteine-rich, acidic integral membrane protein (CRAM) of Trypanosoma brucei brucei.